We begin with the raw amino-acid sequence, 213 residues long: N-(5'-phosphoribosyl)anthranilate isomerase (213 aa).

It belongs to the TrpF family.

It carries out the reaction N-(5-phospho-beta-D-ribosyl)anthranilate = 1-(2-carboxyphenylamino)-1-deoxy-D-ribulose 5-phosphate. It participates in amino-acid biosynthesis; L-tryptophan biosynthesis; L-tryptophan from chorismate: step 3/5. The sequence is that of N-(5'-phosphoribosyl)anthranilate isomerase from Rhodopseudomonas palustris (strain TIE-1).